The following is a 140-amino-acid chain: Nuclear receptor 2C2-associated protein (140 aa).

It belongs to the NR2C2AP family. As to quaternary structure, interacts with NR2C2/TR4.

The protein localises to the nucleus. Functionally, may act as a repressor of NR2C2-mediated transactivation by suppressing the binding between NR2C2/TR4 and the TR4-response element in target genes. The chain is Nuclear receptor 2C2-associated protein (NR2C2AP) from Bos taurus (Bovine).